We begin with the raw amino-acid sequence, 82 residues long: Cytochrome b559 subunit alpha (82 aa).

The helical transmembrane segment at 21-35 (VIHSITIPALFIAGW) threads the bilayer. Residue His-23 coordinates heme.

Belongs to the PsbE/PsbF family. Heterodimer of an alpha subunit and a beta subunit. PSII is composed of 1 copy each of membrane proteins PsbA, PsbB, PsbC, PsbD, PsbE, PsbF, PsbH, PsbI, PsbJ, PsbK, PsbL, PsbM, PsbT, PsbX, PsbY, PsbZ, Psb30/Ycf12, peripheral proteins PsbO, CyanoQ (PsbQ), PsbU, PsbV and a large number of cofactors. It forms dimeric complexes. Heme b serves as cofactor.

The protein resides in the cellular thylakoid membrane. Its function is as follows. This b-type cytochrome is tightly associated with the reaction center of photosystem II (PSII). PSII is a light-driven water:plastoquinone oxidoreductase that uses light energy to abstract electrons from H(2)O, generating O(2) and a proton gradient subsequently used for ATP formation. It consists of a core antenna complex that captures photons, and an electron transfer chain that converts photonic excitation into a charge separation. The polypeptide is Cytochrome b559 subunit alpha (Nostoc sp. (strain PCC 7120 / SAG 25.82 / UTEX 2576)).